We begin with the raw amino-acid sequence, 221 residues long: Ribonuclease T (221 aa).

The 175-residue stretch at 21-195 folds into the Exonuclease domain; that stretch reads VVVDVETAGF…YDAEKTADLF (175 aa). Residues D24, E26, H182, and D187 each contribute to the Mg(2+) site. The active-site Proton donor/acceptor is H182.

It belongs to the RNase T family. As to quaternary structure, homodimer. Requires Mg(2+) as cofactor.

Functionally, trims short 3' overhangs of a variety of RNA species, leaving a one or two nucleotide 3' overhang. Responsible for the end-turnover of tRNA: specifically removes the terminal AMP residue from uncharged tRNA (tRNA-C-C-A). Also appears to be involved in tRNA biosynthesis. The polypeptide is Ribonuclease T (Marinobacter nauticus (strain ATCC 700491 / DSM 11845 / VT8) (Marinobacter aquaeolei)).